Reading from the N-terminus, the 170-residue chain is Crossover junction endodeoxyribonuclease RuvC (170 aa).

Catalysis depends on residues D11, E71, and D143. Residues D11, E71, and D143 each coordinate Mg(2+).

This sequence belongs to the RuvC family. In terms of assembly, homodimer which binds Holliday junction (HJ) DNA. The HJ becomes 2-fold symmetrical on binding to RuvC with unstacked arms; it has a different conformation from HJ DNA in complex with RuvA. In the full resolvosome a probable DNA-RuvA(4)-RuvB(12)-RuvC(2) complex forms which resolves the HJ. Mg(2+) serves as cofactor.

Its subcellular location is the cytoplasm. The enzyme catalyses Endonucleolytic cleavage at a junction such as a reciprocal single-stranded crossover between two homologous DNA duplexes (Holliday junction).. Functionally, the RuvA-RuvB-RuvC complex processes Holliday junction (HJ) DNA during genetic recombination and DNA repair. Endonuclease that resolves HJ intermediates. Cleaves cruciform DNA by making single-stranded nicks across the HJ at symmetrical positions within the homologous arms, yielding a 5'-phosphate and a 3'-hydroxyl group; requires a central core of homology in the junction. The consensus cleavage sequence is 5'-(A/T)TT(C/G)-3'. Cleavage occurs on the 3'-side of the TT dinucleotide at the point of strand exchange. HJ branch migration catalyzed by RuvA-RuvB allows RuvC to scan DNA until it finds its consensus sequence, where it cleaves and resolves the cruciform DNA. The chain is Crossover junction endodeoxyribonuclease RuvC from Rhizobium rhizogenes (strain K84 / ATCC BAA-868) (Agrobacterium radiobacter).